Consider the following 211-residue polypeptide: DNA dC-&gt;dU-editing enzyme APOBEC-3H (211 aa).

One can recognise a CMP/dCMP-type deaminase domain in the interval 4-126 (LTAKTFSLQF…RRQQEGLRLL (123 aa)). Histidine 54 is a binding site for Zn(2+). The active-site Proton donor is glutamate 56. Positions 85 and 88 each coordinate Zn(2+).

Belongs to the cytidine and deoxycytidylate deaminase family. In terms of assembly, homodimer. Zn(2+) is required as a cofactor.

It is found in the cytoplasm. The catalysed reaction is a 2'-deoxycytidine in single-stranded DNA + H2O + H(+) = a 2'-deoxyuridine in single-stranded DNA + NH4(+). Its function is as follows. DNA deaminase (cytidine deaminase) which may act as an inhibitor of retrovirus replication and retrotransposon mobility via deaminase-dependent and -independent mechanisms. This chain is DNA dC-&gt;dU-editing enzyme APOBEC-3H, found in Pongo pygmaeus (Bornean orangutan).